A 307-amino-acid chain; its full sequence is Elongation factor Ts (307 aa).

The interval 79–82 (TDFV) is involved in Mg(2+) ion dislocation from EF-Tu.

It belongs to the EF-Ts family.

It is found in the cytoplasm. Associates with the EF-Tu.GDP complex and induces the exchange of GDP to GTP. It remains bound to the aminoacyl-tRNA.EF-Tu.GTP complex up to the GTP hydrolysis stage on the ribosome. This Sinorhizobium fredii (strain NBRC 101917 / NGR234) protein is Elongation factor Ts.